A 177-amino-acid polypeptide reads, in one-letter code: UPF0251 protein Cag_0886 (177 aa).

The interval 147–177 is disordered; that stretch reads GGCLSDEESDEQENEQRTVGYPESEEELEIE.

This sequence belongs to the UPF0251 family.

The protein is UPF0251 protein Cag_0886 of Chlorobium chlorochromatii (strain CaD3).